The sequence spans 427 residues: Enolase (427 aa).

(2R)-2-phosphoglycerate is bound at residue Q163. Residue E205 is the Proton donor of the active site. D242, E285, and D312 together coordinate Mg(2+). (2R)-2-phosphoglycerate-binding residues include K337, R366, S367, and K388. The active-site Proton acceptor is the K337.

It belongs to the enolase family. The cofactor is Mg(2+).

Its subcellular location is the cytoplasm. The protein localises to the secreted. It localises to the cell surface. It carries out the reaction (2R)-2-phosphoglycerate = phosphoenolpyruvate + H2O. The protein operates within carbohydrate degradation; glycolysis; pyruvate from D-glyceraldehyde 3-phosphate: step 4/5. Functionally, catalyzes the reversible conversion of 2-phosphoglycerate (2-PG) into phosphoenolpyruvate (PEP). It is essential for the degradation of carbohydrates via glycolysis. In Janthinobacterium sp. (strain Marseille) (Minibacterium massiliensis), this protein is Enolase.